Here is a 680-residue protein sequence, read N- to C-terminus: Enzymatic polyprotein (680 aa).

The interval 41–131 (LHCFVDTGAS…LYEPFIQFTD (91 aa)) is protease. The active site involves aspartate 46. The region spanning 273-453 (LKVIKPSKSP…KKINFLGLEI (181 aa)) is the Reverse transcriptase domain.

This sequence belongs to the caulimoviridae enzymatic polyprotein family.

The catalysed reaction is DNA(n) + a 2'-deoxyribonucleoside 5'-triphosphate = DNA(n+1) + diphosphate. Encodes for at least two polypeptides: protease (PR) and reverse transcriptase (RT). The protease processes the polyprotein in cis. Reverse transcriptase is multifunctional enzyme that converts the viral RNA genome into dsDNA in viral cytoplasmic capsids. This enzyme displays a DNA polymerase activity that can copy either DNA or RNA templates, and a ribonuclease H (RNase H) activity that cleaves the RNA strand of RNA-DNA heteroduplexes in a partially processive 3'- to 5'-endonucleasic mode. Neo-synthesized pregenomic RNA (pgRNA) are encapsidated, and reverse-transcribed inside the nucleocapsid. Partial (+)DNA is synthesized from the (-)DNA template and generates the relaxed circular DNA (RC-DNA) genome. After budding and infection, the RC-DNA migrates in the nucleus, and is converted into a plasmid-like covalently closed circular DNA (cccDNA). The sequence is that of Enzymatic polyprotein from Cauliflower mosaic virus (strain NY8153) (CaMV).